We begin with the raw amino-acid sequence, 483 residues long: Matrix metalloproteinase-20 (483 aa).

The first 22 residues, 1–22 (MKVLPASGLAVLLVTALKFSAA), serve as a signal peptide directing secretion. Positions 23–107 (APSLFAATPR…PRCGVPDVAN (85 aa)) are cleaved as a propeptide — activation peptide. The Cysteine switch motif lies at 98-105 (PRCGVPDV). Cys100 is a Zn(2+) binding site. The Ca(2+) site is built by Glu164, Ala165, and Asp166. Positions 176 and 178 each coordinate Zn(2+). Ca(2+)-binding residues include Asp183, Gly184, Arg186, and Thr188. His191 provides a ligand contact to Zn(2+). Positions 197, 198, 200, and 202 each coordinate Ca(2+). Residue His204 coordinates Zn(2+). Ca(2+) contacts are provided by Asp206 and Glu209. Zn(2+) is bound at residue His226. Glu227 is a catalytic residue. His230 and His236 together coordinate Zn(2+). Hemopexin repeat units follow at residues 293–343 (PDIC…FPQL), 344–389 (MSNV…GFPR), 391–439 (VQRI…FSGV), and 440–483 (NGQI…WIGC). Cys296 and Cys483 form a disulfide bridge.

This sequence belongs to the peptidase M10A family. The cofactor is Zn(2+). Ca(2+) is required as a cofactor. In terms of processing, autoactivates at least at the 107-Asn-|-Tyr-108 site. Expressed specifically in the enamel organ.

The protein resides in the secreted. The protein localises to the extracellular space. It localises to the extracellular matrix. Functionally, degrades amelogenin, the major protein component of the enamel matrix and two of the macromolecules characterizing the cartilage extracellular matrix: aggrecan and the cartilage oligomeric matrix protein (COMP). May play a central role in tooth enamel formation. This Sus scrofa (Pig) protein is Matrix metalloproteinase-20 (MMP20).